The primary structure comprises 225 residues: Lipoarabinomannan carrier protein LprG (225 aa).

Residues 1-21 form the signal peptide; sequence MRNRIRLALIPVAVAAIALAG. A lipid anchor (N-palmitoyl cysteine) is attached at cysteine 22. Cysteine 22 is lipidated: S-diacylglycerol cysteine.

The protein belongs to the LppX/LprAFG lipoprotein family. In terms of processing, modified by Lgt on Cys-22 with an S-linked diacylglyceral, signal peptide is removed by LspA, Cys-22 is further modifed with a fatty acid on its amino group by Lnt yielding a triacylated protein.

It localises to the cell inner membrane. Functionally, helps membrane protein MAB_2807 (P55) transport triacylglycerides (TAG) across the inner cell membrane into the periplasm and probably ultimately to the outer membrane. Binds TAG in its hydrophobic cavity and transfers it between lipid bilayers. TAG probably regulates lipid metabolism and growth regulation and plays a structural role in the outer membrane. Also binds mannosides, lipoarabinomannan and lipomannan and various glycolipids in the same cavity. This is Lipoarabinomannan carrier protein LprG from Mycobacteroides abscessus (strain ATCC 19977 / DSM 44196 / CCUG 20993 / CIP 104536 / JCM 13569 / NCTC 13031 / TMC 1543 / L948) (Mycobacterium abscessus).